The primary structure comprises 898 residues: Serine/threonine-protein kinase TAO3 (898 aa).

The Protein kinase domain occupies 24 to 277 (FIGLHEIGHG…SAELLRHDFV (254 aa)). ATP-binding positions include 30 to 38 (IGHGSFGAV) and Lys-53. The active-site Proton acceptor is the Asp-147. Disordered regions lie at residues 316–362 (TRNG…SQSS) and 405–425 (DEAG…VQSQ). At Ser-324 the chain carries Phosphoserine; by ATM. A phosphoserine mark is found at Ser-331, Ser-343, Ser-346, and Ser-349. The segment covering 334–351 (GTSLNREMDSLGSNHSIP) has biased composition (polar residues). Low complexity predominate over residues 352 to 362 (SMSVSTGSQSS). Thr-357 carries the phosphothreonine modification. Ser-359 bears the Phosphoserine mark. The span at 405 to 416 (DEAGHGDPRPEP) shows a compositional bias: basic and acidic residues. Phosphoserine is present on Ser-442. Coiled coils occupy residues 452–502 (EQEN…THAN), 548–649 (FLES…HAML), and 754–879 (LKTL…DMES). Positions 565-596 (EEMNEDHSTPKKEKQERISKHKENLQHTQAEE) are disordered. The residue at position 830 (Lys-830) is an N6-acetyllysine.

Belongs to the protein kinase superfamily. STE Ser/Thr protein kinase family. STE20 subfamily. As to quaternary structure, self-associates. Interacts with ERN1 and TRAF2. Interaction with TRAF2 is facilitated under ER stress conditions, such as treatment with tunicamycin, and may promote TRAF2 phosphorylation. Interacts (via N-terminus) with STK25; the interaction promotes STK25 abundance at the level of protein expression and/or stability. Autophosphorylated. Phosphorylation at Ser-324 by ATM following DNA damage is required for activation of the p38/MAPK14 stress-activated MAPK cascade. Phosphorylated at Ser-324 and on Tyr residues during T cell activation. Phosphorylated by LRRK2.

Its subcellular location is the cytoplasm. It is found in the cell membrane. The protein resides in the membrane raft. The protein localises to the lipid droplet. It catalyses the reaction L-seryl-[protein] + ATP = O-phospho-L-seryl-[protein] + ADP + H(+). The enzyme catalyses L-threonyl-[protein] + ATP = O-phospho-L-threonyl-[protein] + ADP + H(+). Functionally, serine/threonine-protein kinase that acts as a regulator of the p38/MAPK14 stress-activated MAPK cascade and of the MAPK8/JNK cascade. In response to DNA damage, involved in the G2/M transition DNA damage checkpoint by activating the p38/MAPK14 stress-activated MAPK cascade, probably by mediating phosphorylation of upstream MAP2K3 and MAP2K6 kinases. Inhibits basal activity of the MAPK8/JNK cascade and diminishes its activation in response to epidermal growth factor (EGF). Positively regulates canonical T cell receptor (TCR) signaling by preventing early PTPN6/SHP1-mediated inactivation of LCK, ensuring sustained TCR signaling that is required for optimal activation and differentiation of T cells. Phosphorylates PTPN6/SHP1 on 'Thr-394', leading to its polyubiquitination and subsequent proteasomal degradation. Required for cell surface expression of metalloprotease ADAM10 on type 1 transitional B cells which is necessary for their NOTCH-mediated development into marginal zone B cells. Also required for the NOTCH-mediated terminal differentiation of splenic conventional type 2 dendritic cells. Positively regulates osteoblast differentiation by acting as an upstream activator of the JNK pathway. Promotes JNK signaling in hepatocytes and positively regulates hepatocyte lipid storage by inhibiting beta-oxidation and triacylglycerol secretion while enhancing lipid synthesis. Restricts age-associated inflammation by negatively regulating differentiation of macrophages and their production of pro-inflammatory cytokines. Plays a role in negatively regulating the abundance of regulatory T cells in white adipose tissue. The protein is Serine/threonine-protein kinase TAO3 (TAOK3) of Pongo abelii (Sumatran orangutan).